A 333-amino-acid polypeptide reads, in one-letter code: MLTLTRIHTVSYEVRSTFLFISVLEFAVGFLTNAFVFLVNFWDVVKRQPLSNSDCVLLCLSISRLFLHGLLFLSAIQLTHFQKLSEPLNHSYQAIIMLWMIANQANLWLAACLSLLYCSKLIRFSHTFLICLASWVSRKISQMLLGIILCSCICTVLCVWCFFSRPHFTVTTVLFMNNNTRLNWQIKDLNLFYSFLFCYLWSVPPFLLFLVSSGMLTVSLGRHMRTMKVYTRDSRDPSLEAHIKALKSLVSFFCFFVISSCAAFISVPLLILWRDKIGVMVCVGIMAACPSGHAAVLISGNAKLRRAVTTILLWAQSSLKVRADHKADSRTLC.

Over 1-17 (MLTLTRIHTVSYEVRST) the chain is Extracellular. Residues 18–38 (FLFISVLEFAVGFLTNAFVFL) form a helical membrane-spanning segment. Residues 39–55 (VNFWDVVKRQPLSNSDC) lie on the Cytoplasmic side of the membrane. Residues 56-76 (VLLCLSISRLFLHGLLFLSAI) form a helical membrane-spanning segment. At 77-94 (QLTHFQKLSEPLNHSYQA) the chain is on the extracellular side. The helical transmembrane segment at 95–115 (IIMLWMIANQANLWLAACLSL) threads the bilayer. The Cytoplasmic portion of the chain corresponds to 116–142 (LYCSKLIRFSHTFLICLASWVSRKISQ). The chain crosses the membrane as a helical span at residues 143–163 (MLLGIILCSCICTVLCVWCFF). The Extracellular segment spans residues 164–190 (SRPHFTVTTVLFMNNNTRLNWQIKDLN). Asn-178 carries N-linked (GlcNAc...) asparagine glycosylation. Residues 191–211 (LFYSFLFCYLWSVPPFLLFLV) form a helical membrane-spanning segment. Over 212–251 (SSGMLTVSLGRHMRTMKVYTRDSRDPSLEAHIKALKSLVS) the chain is Cytoplasmic. The chain crosses the membrane as a helical span at residues 252–272 (FFCFFVISSCAAFISVPLLIL). The Extracellular portion of the chain corresponds to 273–276 (WRDK). The chain crosses the membrane as a helical span at residues 277–297 (IGVMVCVGIMAACPSGHAAVL). Over 298 to 333 (ISGNAKLRRAVTTILLWAQSSLKVRADHKADSRTLC) the chain is Cytoplasmic.

This sequence belongs to the G-protein coupled receptor T2R family.

It is found in the membrane. Functionally, receptor that may play a role in the perception of bitterness and is gustducin-linked. May play a role in sensing the chemical composition of the gastrointestinal content. The activity of this receptor may stimulate alpha gustducin, mediate PLC-beta-2 activation and lead to the gating of TRPM5. The polypeptide is Taste receptor type 2 member 38 (TAS2R38) (Pan troglodytes (Chimpanzee)).